The primary structure comprises 331 residues: MVSYKEAGVNIEEGYKSVDLIKKHASKTFTKGVLNNLGSFAGMFELPKYKNPVLVSGTDGVGTKLDIAFRMKKYNTVGIDCVAMCVNDILCHGAKPLFFLDYIACGKLEAEVAAQLVEGVSNGCIQSECALIGGETAEMPGFYRDGEYDIAGFAVGIAEKDEIIDGSKIEDGDILIGIASSGPHSNGYSLIRKLVEDLHKDFAGDKIGNTLLAPTKIYVKPVMKLLEKYNIKGMAHVTGGGFYENIPRMFKDDFTAVINKKSYPIPNIFNHLMSLGVEENHMYNTFNMGIGFVLCVNEKDGENIIKDLIEMGEKGYKIGYVKKGDKSVELI.

It belongs to the AIR synthase family.

The protein resides in the cytoplasm. The enzyme catalyses 2-formamido-N(1)-(5-O-phospho-beta-D-ribosyl)acetamidine + ATP = 5-amino-1-(5-phospho-beta-D-ribosyl)imidazole + ADP + phosphate + H(+). The protein operates within purine metabolism; IMP biosynthesis via de novo pathway; 5-amino-1-(5-phospho-D-ribosyl)imidazole from N(2)-formyl-N(1)-(5-phospho-D-ribosyl)glycinamide: step 2/2. The chain is Phosphoribosylformylglycinamidine cyclo-ligase from Clostridium botulinum (strain Loch Maree / Type A3).